The chain runs to 155 residues: Small ribosomal subunit protein uS9 (155 aa).

Belongs to the universal ribosomal protein uS9 family.

In Allorhizobium ampelinum (strain ATCC BAA-846 / DSM 112012 / S4) (Agrobacterium vitis (strain S4)), this protein is Small ribosomal subunit protein uS9.